Reading from the N-terminus, the 248-residue chain is UPF0524 protein C3orf70 homolog (248 aa).

The disordered stretch occupies residues 169–248 (KESDTPKLGH…EVIETMETTV (80 aa)). Positions 200–227 (SCDEDTEEGAELSSEEDYSPESSWEPDE) are enriched in acidic residues.

The protein belongs to the UPF0524 family.

May play a role in neuronal and neurobehavioral development. The sequence is that of UPF0524 protein C3orf70 homolog from Mus musculus (Mouse).